Consider the following 365-residue polypeptide: UDP-N-acetylglucosamine--N-acetylmuramyl-(pentapeptide) pyrophosphoryl-undecaprenol N-acetylglucosamine transferase (365 aa).

UDP-N-acetyl-alpha-D-glucosamine-binding positions include 11–13 (TGG), Asn124, Arg165, Ser192, Ile246, and Gln291.

It belongs to the glycosyltransferase 28 family. MurG subfamily.

Its subcellular location is the cell inner membrane. It catalyses the reaction di-trans,octa-cis-undecaprenyl diphospho-N-acetyl-alpha-D-muramoyl-L-alanyl-D-glutamyl-meso-2,6-diaminopimeloyl-D-alanyl-D-alanine + UDP-N-acetyl-alpha-D-glucosamine = di-trans,octa-cis-undecaprenyl diphospho-[N-acetyl-alpha-D-glucosaminyl-(1-&gt;4)]-N-acetyl-alpha-D-muramoyl-L-alanyl-D-glutamyl-meso-2,6-diaminopimeloyl-D-alanyl-D-alanine + UDP + H(+). It functions in the pathway cell wall biogenesis; peptidoglycan biosynthesis. Cell wall formation. Catalyzes the transfer of a GlcNAc subunit on undecaprenyl-pyrophosphoryl-MurNAc-pentapeptide (lipid intermediate I) to form undecaprenyl-pyrophosphoryl-MurNAc-(pentapeptide)GlcNAc (lipid intermediate II). The protein is UDP-N-acetylglucosamine--N-acetylmuramyl-(pentapeptide) pyrophosphoryl-undecaprenol N-acetylglucosamine transferase of Nitratidesulfovibrio vulgaris (strain DP4) (Desulfovibrio vulgaris).